A 180-amino-acid chain; its full sequence is Large ribosomal subunit protein uL5 (180 aa).

This sequence belongs to the universal ribosomal protein uL5 family. In terms of assembly, part of the 50S ribosomal subunit; part of the 5S rRNA/L5/L18/L25 subcomplex. Contacts the 5S rRNA and the P site tRNA. Forms a bridge to the 30S subunit in the 70S ribosome.

Functionally, this is one of the proteins that bind and probably mediate the attachment of the 5S RNA into the large ribosomal subunit, where it forms part of the central protuberance. In the 70S ribosome it contacts protein S13 of the 30S subunit (bridge B1b), connecting the 2 subunits; this bridge is implicated in subunit movement. Contacts the P site tRNA; the 5S rRNA and some of its associated proteins might help stabilize positioning of ribosome-bound tRNAs. The chain is Large ribosomal subunit protein uL5 from Ligilactobacillus salivarius (strain UCC118) (Lactobacillus salivarius).